The chain runs to 121 residues: ATP synthase epsilon chain (121 aa).

The protein belongs to the ATPase epsilon chain family. F-type ATPases have 2 components, CF(1) - the catalytic core - and CF(0) - the membrane proton channel. CF(1) has five subunits: alpha(3), beta(3), gamma(1), delta(1), epsilon(1). CF(0) has three main subunits: a, b and c.

It localises to the cell membrane. In terms of biological role, produces ATP from ADP in the presence of a proton gradient across the membrane. The chain is ATP synthase epsilon chain (atpC) from Mycobacterium bovis (strain ATCC BAA-935 / AF2122/97).